A 286-amino-acid polypeptide reads, in one-letter code: Thiazole synthase (286 aa).

Lys-122 (schiff-base intermediate with DXP) is an active-site residue. 1-deoxy-D-xylulose 5-phosphate is bound by residues Gly-183, Ala-209–Gly-210, and Asn-231–Thr-232.

Belongs to the ThiG family. As to quaternary structure, homotetramer. Forms heterodimers with either ThiH or ThiS.

The protein localises to the cytoplasm. It carries out the reaction [ThiS sulfur-carrier protein]-C-terminal-Gly-aminoethanethioate + 2-iminoacetate + 1-deoxy-D-xylulose 5-phosphate = [ThiS sulfur-carrier protein]-C-terminal Gly-Gly + 2-[(2R,5Z)-2-carboxy-4-methylthiazol-5(2H)-ylidene]ethyl phosphate + 2 H2O + H(+). It participates in cofactor biosynthesis; thiamine diphosphate biosynthesis. Functionally, catalyzes the rearrangement of 1-deoxy-D-xylulose 5-phosphate (DXP) to produce the thiazole phosphate moiety of thiamine. Sulfur is provided by the thiocarboxylate moiety of the carrier protein ThiS. In vitro, sulfur can be provided by H(2)S. This Synechococcus elongatus (strain ATCC 33912 / PCC 7942 / FACHB-805) (Anacystis nidulans R2) protein is Thiazole synthase.